Reading from the N-terminus, the 287-residue chain is Co-chaperone protein DjlA (287 aa).

The Periplasmic segment spans residues 1-6 (MQIFGK). The helical transmembrane segment at 7-30 (ILGAFFGFLFGGVFGALFGLFIGH) threads the bilayer. Residues 31–287 (QFDKARRLSQ…DLIKKEKGFK (257 aa)) are Cytoplasmic-facing. The segment at 192 to 213 (GGFGGQQHQSHHSSSHGGWQQA) is disordered. A J domain is found at 221–287 (DAYKILGIDA…DLIKKEKGFK (67 aa)).

Homodimer.

It is found in the cell inner membrane. Functionally, regulatory DnaK co-chaperone. Direct interaction between DnaK and DjlA is needed for the induction of the wcaABCDE operon, involved in the synthesis of a colanic acid polysaccharide capsule, possibly through activation of the RcsB/RcsC phosphotransfer signaling pathway. The colanic acid capsule may help the bacterium survive conditions outside the host. This Vibrio vulnificus (strain CMCP6) protein is Co-chaperone protein DjlA.